The primary structure comprises 1570 residues: Mediator of RNA polymerase II transcription subunit 1 (1570 aa).

2 short sequence motifs (LXXLL motif) span residues L585–L589 and L626–L630. 3 disordered regions span residues T592 to D687, S771 to F880, and S922 to D1561. The segment covering T675–D687 has biased composition (basic and acidic residues). Polar residues-rich tracts occupy residues R788 to F801, G832 to F861, and Q931 to L942. The segment covering L946 to E958 has biased composition (basic and acidic residues). Over residues N961 to S970 the composition is skewed to gly residues. 5 stretches are compositionally biased toward low complexity: residues P1022–G1035, S1066–S1082, S1089–G1113, S1121–K1140, and S1152–S1161. The span at M1173–S1190 shows a compositional bias: polar residues. The span at G1217–S1228 shows a compositional bias: gly residues. Residues N1229–S1271 are compositionally biased toward low complexity. Residues V1276–K1287 are compositionally biased toward polar residues. Residues V1308–T1328 are compositionally biased toward gly residues. Over residues P1347–K1359 the composition is skewed to basic and acidic residues. Composition is skewed to polar residues over residues S1418–T1433 and P1441–D1455. A compositionally biased stretch (low complexity) spans E1459–S1469. The segment covering K1494–K1503 has biased composition (basic residues). Residues R1504–K1516 are compositionally biased toward basic and acidic residues. The segment covering M1536–S1546 has biased composition (low complexity).

It belongs to the Mediator complex subunit 1 family. As to quaternary structure, component of the Mediator complex.

Its subcellular location is the nucleus. Its function is as follows. Component of the Mediator complex, a coactivator involved in the regulated transcription of nearly all RNA polymerase II-dependent genes. Mediator functions as a bridge to convey information from gene-specific regulatory proteins to the basal RNA polymerase II transcription machinery. Mediator is recruited to promoters by direct interactions with regulatory proteins and serves as a scaffold for the assembly of a functional preinitiation complex with RNA polymerase II and the general transcription factors. The polypeptide is Mediator of RNA polymerase II transcription subunit 1 (med1) (Xenopus laevis (African clawed frog)).